The primary structure comprises 600 residues: Elongation factor 4 (600 aa).

A tr-type G domain is found at 5–187 (SNIRNFSIIA…ALVERIPAPT (183 aa)). Residues 17–22 (DHGKST) and 134–137 (NKID) contribute to the GTP site.

Belongs to the TRAFAC class translation factor GTPase superfamily. Classic translation factor GTPase family. LepA subfamily.

Its subcellular location is the cell inner membrane. The catalysed reaction is GTP + H2O = GDP + phosphate + H(+). Its function is as follows. Required for accurate and efficient protein synthesis under certain stress conditions. May act as a fidelity factor of the translation reaction, by catalyzing a one-codon backward translocation of tRNAs on improperly translocated ribosomes. Back-translocation proceeds from a post-translocation (POST) complex to a pre-translocation (PRE) complex, thus giving elongation factor G a second chance to translocate the tRNAs correctly. Binds to ribosomes in a GTP-dependent manner. The protein is Elongation factor 4 of Psychrobacter sp. (strain PRwf-1).